Consider the following 74-residue polypeptide: UPF0352 protein PM1884 (74 aa).

This sequence belongs to the UPF0352 family.

The polypeptide is UPF0352 protein PM1884 (Pasteurella multocida (strain Pm70)).